A 201-amino-acid chain; its full sequence is Molybdenum cofactor guanylyltransferase (201 aa).

GTP contacts are provided by residues leucine 15 to glycine 17, lysine 28, aspartate 74, and aspartate 104. Aspartate 104 lines the Mg(2+) pocket.

It belongs to the MobA family. As to quaternary structure, monomer. Mg(2+) is required as a cofactor.

Its subcellular location is the cytoplasm. The catalysed reaction is Mo-molybdopterin + GTP + H(+) = Mo-molybdopterin guanine dinucleotide + diphosphate. Its function is as follows. Transfers a GMP moiety from GTP to Mo-molybdopterin (Mo-MPT) cofactor (Moco or molybdenum cofactor) to form Mo-molybdopterin guanine dinucleotide (Mo-MGD) cofactor. In Pseudomonas syringae pv. tomato (strain ATCC BAA-871 / DC3000), this protein is Molybdenum cofactor guanylyltransferase.